The chain runs to 683 residues: uncharacterized protein (683 aa).

Polar residues-rich tracts occupy residues 407–420 (FETS…TYTP) and 512–529 (EGSS…SSEA). Disordered stretches follow at residues 407–427 (FETS…KLST), 509–556 (FSRE…SSTV), and 621–648 (HNTS…DHPD). Positions 531–542 (LPPLLTTTPTPT) are enriched in low complexity. Composition is skewed to polar residues over residues 543-556 (NTEK…SSTV) and 621-630 (HNTSMPNPHH). The span at 633–648 (VKPEDHPHHPEGDHPD) shows a compositional bias: basic and acidic residues. The chain crosses the membrane as a helical span at residues 657–677 (IWLLPIAGTIFALVALVIVNI).

The protein localises to the host membrane. This is an uncharacterized protein from Alcelaphine herpesvirus 1 (strain C500) (AlHV-1).